A 551-amino-acid polypeptide reads, in one-letter code: Probable NADH-ubiquinone oxidoreductase C947.15c, mitochondrial (551 aa).

A mitochondrion-targeting transit peptide spans 1–35 (MSVSKARLQSVVRLSRTVPYSKTMVRSFHVSCAVK). 92 to 122 (NIVVLGSGWGAVAAIKNLDPSLYNITLVSPR) contacts FAD. 255-291 (LHITVVGGGPTGMEFAAEMQDFIDNDVKDMFPELQKD) contributes to the NAD(+) binding site.

The protein belongs to the NADH dehydrogenase family.

The protein resides in the mitochondrion. It carries out the reaction a quinone + NADH + H(+) = a quinol + NAD(+). The enzyme catalyses a ubiquinone + NADH + H(+) = a ubiquinol + NAD(+). In terms of biological role, catalyzes the oxidation of NADH. This chain is Probable NADH-ubiquinone oxidoreductase C947.15c, mitochondrial, found in Schizosaccharomyces pombe (strain 972 / ATCC 24843) (Fission yeast).